The sequence spans 206 residues: High frequency lysogenization protein HflD homolog (206 aa).

The protein belongs to the HflD family.

Its subcellular location is the cytoplasm. It is found in the cell inner membrane. The polypeptide is High frequency lysogenization protein HflD homolog (Ectopseudomonas mendocina (strain ymp) (Pseudomonas mendocina)).